Consider the following 288-residue polypeptide: Alpha-acetolactate decarboxylase (288 aa).

A signal peptide spans 1 to 23; it reads MNIKYFLIFLILLAVTSFTLFSG.

The protein belongs to the alpha-acetolactate decarboxylase family.

It catalyses the reaction (2S)-2-acetolactate + H(+) = (R)-acetoin + CO2. It functions in the pathway polyol metabolism; (R,R)-butane-2,3-diol biosynthesis; (R,R)-butane-2,3-diol from pyruvate: step 2/3. Functionally, converts acetolactate into acetoin. The polypeptide is Alpha-acetolactate decarboxylase (Methanosarcina mazei (strain ATCC BAA-159 / DSM 3647 / Goe1 / Go1 / JCM 11833 / OCM 88) (Methanosarcina frisia)).